The sequence spans 330 residues: Pseudouridine-5'-phosphate glycosidase (330 aa).

The active-site Proton donor is E50. Residues K112 and V132 each coordinate substrate. Residue D164 coordinates Mn(2+). Substrate is bound at residue 166-168 (SSD). K185 serves as the catalytic Nucleophile.

The protein belongs to the pseudouridine-5'-phosphate glycosidase family. As to quaternary structure, homotrimer. Mn(2+) serves as cofactor.

Its subcellular location is the peroxisome. The enzyme catalyses D-ribose 5-phosphate + uracil = psi-UMP + H2O. In terms of biological role, catalyzes the reversible cleavage of pseudouridine 5'-phosphate (PsiMP) to ribose 5-phosphate and uracil. Functions biologically in the cleavage direction, as part of a pseudouridine degradation pathway. Acts together with the pseudouridine kinase PUKI in the peroxisome to prevent toxic pseudouridine monophosphate accumulation. Can catalyze the formation of pseudouridine 5'-phosphate (reverse reaction) in vitro, with a catalytic efficiency 4 times lower than the hydrolysis reaction. This Arabidopsis thaliana (Mouse-ear cress) protein is Pseudouridine-5'-phosphate glycosidase.